The sequence spans 93 residues: MASKAILEELNILSSKIFGTQYKSNNSRTGRKFVVQELKGAKLKSYYPATINYRQLRTLLNDKTFPDSDEELRMEIRKGRIRQGKGASKSKKK.

The protein belongs to the mitochondrion-specific ribosomal protein mS33 family. As to quaternary structure, component of the mitochondrial small ribosomal subunit (mt-SSU). Mature yeast 74S mitochondrial ribosomes consist of a small (37S) and a large (54S) subunit. The 37S small subunit contains a 15S ribosomal RNA (15S mt-rRNA) and at least 32 different proteins. The 54S large subunit contains a 21S rRNA (21S mt-rRNA) and at least 45 different proteins.

It is found in the mitochondrion. Functionally, component of the mitochondrial ribosome (mitoribosome), a dedicated translation machinery responsible for the synthesis of mitochondrial genome-encoded proteins, including at least some of the essential transmembrane subunits of the mitochondrial respiratory chain. The mitoribosomes are attached to the mitochondrial inner membrane and translation products are cotranslationally integrated into the membrane. The chain is Small ribosomal subunit protein mS33 (rsm27) from Schizosaccharomyces pombe (strain 972 / ATCC 24843) (Fission yeast).